We begin with the raw amino-acid sequence, 137 residues long: uncharacterized protein (137 aa).

Residues 5–136 (NRHLIHQINQ…FSHLFRMFLQ (132 aa)) enclose the HTH marR-type domain. The H-T-H motif DNA-binding region spans 51-74 (QKEIWSYLNVEAPTVTRTIKRLEE).

This is an uncharacterized protein from Bacillus subtilis (strain 168).